The following is a 92-amino-acid chain: Small ribosomal subunit protein uS19c (92 aa).

This sequence belongs to the universal ribosomal protein uS19 family.

It is found in the plastid. The protein localises to the cyanelle. Functionally, protein S19 forms a complex with S13 that binds strongly to the 16S ribosomal RNA. This is Small ribosomal subunit protein uS19c (rps19) from Cyanophora paradoxa.